The primary structure comprises 319 residues: Ribonuclease Z (319 aa).

Zn(2+) is bound by residues H62, H64, D66, H67, H145, D216, and H274. Catalysis depends on D66, which acts as the Proton acceptor.

This sequence belongs to the RNase Z family. In terms of assembly, homodimer. It depends on Zn(2+) as a cofactor.

It catalyses the reaction Endonucleolytic cleavage of RNA, removing extra 3' nucleotides from tRNA precursor, generating 3' termini of tRNAs. A 3'-hydroxy group is left at the tRNA terminus and a 5'-phosphoryl group is left at the trailer molecule.. Its function is as follows. Zinc phosphodiesterase, which displays some tRNA 3'-processing endonuclease activity. Probably involved in tRNA maturation, by removing a 3'-trailer from precursor tRNA. This Parasynechococcus marenigrum (strain WH8102) protein is Ribonuclease Z.